Consider the following 128-residue polypeptide: MVLPKHMRLKGHRCFDFIYKEGSRFYSSSMVLRVTDANKKPQVKGKQSKTRPSIKCAISISNKVSKKSVTRNKLRRLFHHHLSLRLSNMSCDKEIWAFISLKPSSMKNSYSTLLKECDKLLTKAGITK.

It belongs to the RnpA family. Consists of a catalytic RNA component (M1 or rnpB) and a protein subunit.

The enzyme catalyses Endonucleolytic cleavage of RNA, removing 5'-extranucleotides from tRNA precursor.. In terms of biological role, RNaseP catalyzes the removal of the 5'-leader sequence from pre-tRNA to produce the mature 5'-terminus. It can also cleave other RNA substrates such as 4.5S RNA. The protein component plays an auxiliary but essential role in vivo by binding to the 5'-leader sequence and broadening the substrate specificity of the ribozyme. This is Ribonuclease P protein component from Prochlorococcus marinus (strain NATL1A).